The following is a 488-amino-acid chain: Eukaryotic translation initiation factor 3 subunit L (488 aa).

2 disordered regions span residues 1–34 and 427–449; these read MSLPQHQNRDAARRAPDDDDDAEEETMANDYREQ and SEGGLLERRGDPQQRSRLRHGKE. Positions 7–16 are enriched in basic and acidic residues; the sequence is QNRDAARRAP. The segment covering 17–27 has biased composition (acidic residues); that stretch reads DDDDDAEEETM. The region spanning 256–450 is the PCI domain; that stretch reads DAIRMFSHIL…RSRLRHGKEI (195 aa). Residues 431–440 are compositionally biased toward basic and acidic residues; sequence LLERRGDPQQ.

It belongs to the eIF-3 subunit L family. Component of the eukaryotic translation initiation factor 3 (eIF-3) complex.

Its subcellular location is the cytoplasm. Functionally, component of the eukaryotic translation initiation factor 3 (eIF-3) complex, which is involved in protein synthesis of a specialized repertoire of mRNAs and, together with other initiation factors, stimulates binding of mRNA and methionyl-tRNAi to the 40S ribosome. The eIF-3 complex specifically targets and initiates translation of a subset of mRNAs involved in cell proliferation. In Phaeosphaeria nodorum (strain SN15 / ATCC MYA-4574 / FGSC 10173) (Glume blotch fungus), this protein is Eukaryotic translation initiation factor 3 subunit L.